The primary structure comprises 316 residues: N-acetyl-gamma-glutamyl-phosphate reductase (316 aa).

C136 is a catalytic residue.

The protein belongs to the NAGSA dehydrogenase family. Type 1 subfamily.

It localises to the cytoplasm. The catalysed reaction is N-acetyl-L-glutamate 5-semialdehyde + phosphate + NADP(+) = N-acetyl-L-glutamyl 5-phosphate + NADPH + H(+). It participates in amino-acid biosynthesis; L-arginine biosynthesis; N(2)-acetyl-L-ornithine from L-glutamate: step 3/4. In terms of biological role, catalyzes the NADPH-dependent reduction of N-acetyl-5-glutamyl phosphate to yield N-acetyl-L-glutamate 5-semialdehyde. The sequence is that of N-acetyl-gamma-glutamyl-phosphate reductase from Xanthomonas euvesicatoria pv. vesicatoria (strain 85-10) (Xanthomonas campestris pv. vesicatoria).